We begin with the raw amino-acid sequence, 427 residues long: cAMP-dependent protein kinase regulatory subunit (427 aa).

Residues 38–184 are dimerization and phosphorylation; sequence QFCSNFFIRK…RIKVSISNNF (147 aa). Positions 96-145 are disordered; the sequence is TTHMGHPNDHGALHDDDDDPLEDEDDEEFDKFSTEPLPSLPPTNYNRGRR. A compositionally biased stretch (acidic residues) spans 110–124; that stretch reads DDDDDPLEDEDDEEF. Position 147 is a phosphoserine (serine 147). Residues 185–300, glutamate 250, arginine 259, 303–422, glutamate 372, and arginine 381 each bind 3',5'-cyclic AMP; these read LFRN…FLSE and LLKS…YHAV.

The protein belongs to the cAMP-dependent kinase regulatory chain family. In terms of assembly, tetramer, composed of 2 regulatory (R) and 2 catalytic (C) subunits. In the presence of cAMP it dissociates into 2 active monomeric C subunits and an R dimer.

The sequence is that of cAMP-dependent protein kinase regulatory subunit (pkar) from Mucor circinelloides f. lusitanicus (Mucor racemosus var. lusitanicus).